Consider the following 386-residue polypeptide: Antilisterial bacteriocin subtilosin biosynthesis protein AlbE (386 aa).

In terms of biological role, involved in the production of the bacteriocin subtilosin. This chain is Antilisterial bacteriocin subtilosin biosynthesis protein AlbE (albE), found in Bacillus subtilis (strain 168).